The chain runs to 505 residues: ATP synthase subunit alpha (505 aa).

171-178 (GDRQTGKT) lines the ATP pocket.

This sequence belongs to the ATPase alpha/beta chains family. F-type ATPases have 2 components, CF(1) - the catalytic core - and CF(0) - the membrane proton channel. CF(1) has five subunits: alpha(3), beta(3), gamma(1), delta(1), epsilon(1). CF(0) has three main subunits: a(1), b(2) and c(9-12). The alpha and beta chains form an alternating ring which encloses part of the gamma chain. CF(1) is attached to CF(0) by a central stalk formed by the gamma and epsilon chains, while a peripheral stalk is formed by the delta and b chains.

It is found in the cell inner membrane. It catalyses the reaction ATP + H2O + 4 H(+)(in) = ADP + phosphate + 5 H(+)(out). Its function is as follows. Produces ATP from ADP in the presence of a proton gradient across the membrane. The alpha chain is a regulatory subunit. In Nitratiruptor sp. (strain SB155-2), this protein is ATP synthase subunit alpha.